Reading from the N-terminus, the 103-residue chain is Large ribosomal subunit protein eL42 (103 aa).

A disordered region spans residues 37–56; sequence GKRRYDRKQSGFGGQTKPVF.

It belongs to the eukaryotic ribosomal protein eL42 family.

The protein is Large ribosomal subunit protein eL42 (rpl36a) of Dictyostelium discoideum (Social amoeba).